A 132-amino-acid polypeptide reads, in one-letter code: Small ribosomal subunit protein uS8c (132 aa).

It belongs to the universal ribosomal protein uS8 family. In terms of assembly, part of the 30S ribosomal subunit.

It localises to the plastid. Its subcellular location is the chloroplast. One of the primary rRNA binding proteins, it binds directly to 16S rRNA central domain where it helps coordinate assembly of the platform of the 30S subunit. This chain is Small ribosomal subunit protein uS8c (rps8), found in Drimys granadensis.